Here is a 123-residue protein sequence, read N- to C-terminus: Defensin beta 118 (123 aa).

The first 19 residues, 1–19 (MKLLLLALPMLVLLPQVIP), serve as a signal peptide directing secretion. 3 disulfides stabilise this stretch: cysteine 27/cysteine 54, cysteine 34/cysteine 48, and cysteine 38/cysteine 55. Positions 65–123 (VPTTSPTPLSDSTPGIIDDILTVRFTTDYFEVSSKKDMIEESEAGRGTETSLPNVHHSS) are excised as a propeptide. Positions 100 to 110 (KDMIEESEAGR) are enriched in basic and acidic residues. The tract at residues 100–123 (KDMIEESEAGRGTETSLPNVHHSS) is disordered. The span at 112-123 (TETSLPNVHHSS) shows a compositional bias: polar residues.

It belongs to the beta-defensin family. The three-dimensional structure formed by the three intramolecular disulfide bridges is indispensable for antimicrobial activity.

It is found in the secreted. Host defense peptide that exhibits antimicrobial activity against both Gram-negative bacteria, such as E.coli and S.typhimurium, and Gram-positive bacteria, such as S.aureus and B.subtilis. Inhibits cell adhesion of E.coli on intestinal epithelial enterocytes. Causes rapid permeabilization of both the outer and inner membrane of E.coli, leading to morphological alterations on the bacterial surface. Binds to bacterial lipopolysaccharides (LPS) with high affinity, and may thereby be involved in immunoregulation through LPS neutralization. May contribute to epididymal innate immunity and protect the sperm against attack by microorganisms. The protein is Defensin beta 118 (DEFB118) of Gorilla gorilla gorilla (Western lowland gorilla).